A 33-amino-acid chain; its full sequence is Brevinin-2PTb (33 aa).

An intrachain disulfide couples cysteine 27 to cysteine 33.

As to expression, expressed by the skin glands.

Its subcellular location is the secreted. Its function is as follows. Has antibacterial activity against the Gram-positive bacterium S.aureus ATCC 25923 (MIC=9 uM) and the Gram-negative bacterium E.coli ATCC 25726 (MIC=9 uM). This Pulchrana picturata (Malaysian fire frog) protein is Brevinin-2PTb.